The primary structure comprises 101 residues: Putative pterin-4-alpha-carbinolamine dehydratase (101 aa).

Belongs to the pterin-4-alpha-carbinolamine dehydratase family.

It catalyses the reaction (4aS,6R)-4a-hydroxy-L-erythro-5,6,7,8-tetrahydrobiopterin = (6R)-L-erythro-6,7-dihydrobiopterin + H2O. The polypeptide is Putative pterin-4-alpha-carbinolamine dehydratase (Nitrobacter hamburgensis (strain DSM 10229 / NCIMB 13809 / X14)).